The sequence spans 467 residues: Argininosuccinate lyase (467 aa).

It belongs to the lyase 1 family. Argininosuccinate lyase subfamily.

Its subcellular location is the cytoplasm. It catalyses the reaction 2-(N(omega)-L-arginino)succinate = fumarate + L-arginine. It participates in amino-acid biosynthesis; L-arginine biosynthesis; L-arginine from L-ornithine and carbamoyl phosphate: step 3/3. In Nitrosococcus oceani (strain ATCC 19707 / BCRC 17464 / JCM 30415 / NCIMB 11848 / C-107), this protein is Argininosuccinate lyase.